The chain runs to 341 residues: MALKVYYDKDCDLGLIQKKKVAVIGFGSQGHAHAENLRDSGVEVIIGLYRGGSSWVKAEAKGFKVLEVSEATKVADVIMILIPDELQADVFAKDILPSLSEDKIIAFGHGFNIHFGQIKAPKGVGVIMVAPKAPGHTVRSEFVKGGGIPDLIAVEQDTSRGDAKAIALSYASAIGGGRSGIIETTFKDETETDLFGEQAVLCGGVTSLVKAGFETLVEAGYPEEMAYFECLHELKLIVDLIYEGGLANMRYSISNTAEYGDMVSGPRVINEESKKAMKQILKDIQEGRFAKDFILERKAGYARMNAERKNLANHKIEQVGGRLRAMMPWIGANKLVDKERN.

The region spanning 3 to 184 (LKVYYDKDCD…GGGRSGIIET (182 aa)) is the KARI N-terminal Rossmann domain. NADP(+)-binding positions include 26–29 (FGSQ), S54, and 84–87 (DELQ). H109 is a catalytic residue. G135 is an NADP(+) binding site. Residues 185-330 (TFKDETETDL…GRLRAMMPWI (146 aa)) form the KARI C-terminal knotted domain. Mg(2+) contacts are provided by D193, E197, E229, and E233. Residue S254 participates in substrate binding.

The protein belongs to the ketol-acid reductoisomerase family. The cofactor is Mg(2+).

The enzyme catalyses (2R)-2,3-dihydroxy-3-methylbutanoate + NADP(+) = (2S)-2-acetolactate + NADPH + H(+). It catalyses the reaction (2R,3R)-2,3-dihydroxy-3-methylpentanoate + NADP(+) = (S)-2-ethyl-2-hydroxy-3-oxobutanoate + NADPH + H(+). Its pathway is amino-acid biosynthesis; L-isoleucine biosynthesis; L-isoleucine from 2-oxobutanoate: step 2/4. It participates in amino-acid biosynthesis; L-valine biosynthesis; L-valine from pyruvate: step 2/4. In terms of biological role, involved in the biosynthesis of branched-chain amino acids (BCAA). Catalyzes an alkyl-migration followed by a ketol-acid reduction of (S)-2-acetolactate (S2AL) to yield (R)-2,3-dihydroxy-isovalerate. In the isomerase reaction, S2AL is rearranged via a Mg-dependent methyl migration to produce 3-hydroxy-3-methyl-2-ketobutyrate (HMKB). In the reductase reaction, this 2-ketoacid undergoes a metal-dependent reduction by NADPH to yield (R)-2,3-dihydroxy-isovalerate. In Helicobacter hepaticus (strain ATCC 51449 / 3B1), this protein is Ketol-acid reductoisomerase (NADP(+)).